Reading from the N-terminus, the 486-residue chain is GTPase Obg (486 aa).

In terms of domain architecture, Obg spans 2 to 159 (SRFIDRVVLH…RELVLELKSV (158 aa)). In terms of domain architecture, OBG-type G spans 160–340 (ADVGLVGFPS…LTFALAKLVA (181 aa)). GTP-binding positions include 166–173 (GFPSAGKS), 191–195 (FTTLV), 212–215 (DVPG), 292–295 (NKAD), and 321–323 (SAV). Mg(2+)-binding residues include S173 and T193. The OCT domain maps to 358–438 (PVISNENSFS…IGNVSFDWEP (81 aa)). The segment at 462–486 (RIGATERKHASRIRRGLEGLDPEDQ) is disordered.

This sequence belongs to the TRAFAC class OBG-HflX-like GTPase superfamily. OBG GTPase family. As to quaternary structure, monomer. It depends on Mg(2+) as a cofactor.

The protein localises to the cytoplasm. Its function is as follows. An essential GTPase which binds GTP, GDP and possibly (p)ppGpp with moderate affinity, with high nucleotide exchange rates and a fairly low GTP hydrolysis rate. Plays a role in control of the cell cycle, stress response, ribosome biogenesis and in those bacteria that undergo differentiation, in morphogenesis control. This chain is GTPase Obg, found in Rhodococcus jostii (strain RHA1).